The sequence spans 540 residues: Putative serine protease F56F10.1 (540 aa).

An N-terminal signal peptide occupies residues 1-16 (MLRNLLLLLLPLLIEA). N-linked (GlcNAc...) asparagine glycosylation is found at Asn58 and Asn87. The active-site Charge relay system is the Ser182. 6 N-linked (GlcNAc...) asparagine glycosylation sites follow: Asn270, Asn300, Asn317, Asn343, Asn441, and Asn449. The Charge relay system role is filled by Asp453. An N-linked (GlcNAc...) asparagine glycan is attached at Asn475. The active-site Charge relay system is His479.

The protein belongs to the peptidase S28 family.

This is Putative serine protease F56F10.1 from Caenorhabditis elegans.